The sequence spans 151 residues: Ribonuclease H (151 aa).

One can recognise an RNase H type-1 domain in the interval 1–141; that stretch reads MQEVTVYSDG…ADALANKGVE (141 aa). Residues Asp9, Glu47, Asp69, and Asp133 each contribute to the Mg(2+) site.

It belongs to the RNase H family. Monomer. Mg(2+) serves as cofactor.

It localises to the cytoplasm. The enzyme catalyses Endonucleolytic cleavage to 5'-phosphomonoester.. Its function is as follows. Endonuclease that specifically degrades the RNA of RNA-DNA hybrids. The sequence is that of Ribonuclease H from Ralstonia nicotianae (strain ATCC BAA-1114 / GMI1000) (Ralstonia solanacearum).